Reading from the N-terminus, the 443-residue chain is Threonine/serine transporter TdcC (443 aa).

11 helical membrane-spanning segments follow: residues 24 to 44 (WVLG…PISA), 45 to 65 (GIGG…IAFF), 95 to 115 (VGGV…LWIY), 140 to 160 (VVAL…KDLM), 163 to 183 (VMGY…LSLI), 207 to 227 (ILVT…FSPI), 259 to 279 (ASVL…FTLS), 319 to 339 (ASII…LGTL), 363 to 383 (LNMI…YINP), 385 to 405 (ILDL…CLLP), and 423 to 443 (SNYF…YQLM).

This sequence belongs to the amino acid/polyamine transporter 2 family. SdaC/TdcC subfamily.

It localises to the cell inner membrane. It carries out the reaction L-threonine(in) + H(+)(in) = L-threonine(out) + H(+)(out). It catalyses the reaction L-serine(in) + H(+)(in) = L-serine(out) + H(+)(out). Functionally, involved in the import of threonine and serine into the cell, with the concomitant import of a proton (symport system). This Edwardsiella tarda protein is Threonine/serine transporter TdcC.